Here is a 196-residue protein sequence, read N- to C-terminus: Protein LURP-one-related 8 (196 aa).

Belongs to the LOR family.

Might be related to the phospholipid scramblase and tubby-like superfamily of membrane tethered transcription factors. The polypeptide is Protein LURP-one-related 8 (Arabidopsis thaliana (Mouse-ear cress)).